Here is a 358-residue protein sequence, read N- to C-terminus: sn-glycerol-3-phosphate import ATP-binding protein UgpC (358 aa).

Positions 4-235 constitute an ABC transporter domain; that stretch reads VELKQVRKTY…PATLFVASFI (232 aa). Residue 37 to 44 coordinates ATP; the sequence is GPSGCGKS.

The protein belongs to the ABC transporter superfamily. sn-glycerol-3-phosphate importer (TC 3.A.1.1.3) family. As to quaternary structure, the complex is composed of two ATP-binding proteins (UgpC), two transmembrane proteins (UgpA and UgpE) and a solute-binding protein (UgpB).

The protein localises to the cell inner membrane. The catalysed reaction is sn-glycerol 3-phosphate(out) + ATP + H2O = sn-glycerol 3-phosphate(in) + ADP + phosphate + H(+). In terms of biological role, part of the ABC transporter complex UgpBAEC involved in sn-glycerol-3-phosphate (G3P) import. Responsible for energy coupling to the transport system. The protein is sn-glycerol-3-phosphate import ATP-binding protein UgpC of Roseobacter denitrificans (strain ATCC 33942 / OCh 114) (Erythrobacter sp. (strain OCh 114)).